The primary structure comprises 108 residues: UPF0145 protein LACR_1006 (108 aa).

This sequence belongs to the UPF0145 family.

This Lactococcus lactis subsp. cremoris (strain SK11) protein is UPF0145 protein LACR_1006.